Reading from the N-terminus, the 206-residue chain is Protein GET1 (206 aa).

Over Met1–Leu4 the chain is Lumenal. The helical transmembrane segment at Leu5 to Ala24 threads the bilayer. Residues Thr25–Arg110 are Cytoplasmic-facing. The stretch at Ala75 to Ser100 forms a coiled coil. The chain crosses the membrane as a helical span at residues Trp111 to Phe131. The Lumenal segment spans residues Thr132–Thr155. A helical transmembrane segment spans residues Val156–Val172. Topologically, residues Gly173 to Gln206 are cytoplasmic.

This sequence belongs to the WRB/GET1 family. In terms of assembly, interacts with GET3.

Its subcellular location is the endoplasmic reticulum membrane. Functionally, required for the post-translational delivery of tail-anchored (TA) proteins to the endoplasmic reticulum. Acts as a membrane receptor for soluble GET3, which recognizes and selectively binds the transmembrane domain of TA proteins in the cytosol. The polypeptide is Protein GET1 (Ajellomyces capsulatus (strain H143) (Darling's disease fungus)).